Here is a 190-residue protein sequence, read N- to C-terminus: Ribosome maturation factor RimM (190 aa).

In terms of domain architecture, PRC barrel spans 95–171 (DPDEFYDHEL…VVMIEPPEGL (77 aa)). Positions 169 to 190 (EGLLDPDFGDKSNSDNSNSDND) are disordered.

Belongs to the RimM family. As to quaternary structure, binds ribosomal protein uS19.

It is found in the cytoplasm. An accessory protein needed during the final step in the assembly of 30S ribosomal subunit, possibly for assembly of the head region. Essential for efficient processing of 16S rRNA. May be needed both before and after RbfA during the maturation of 16S rRNA. It has affinity for free ribosomal 30S subunits but not for 70S ribosomes. This is Ribosome maturation factor RimM from Rhodococcus erythropolis (strain PR4 / NBRC 100887).